The chain runs to 426 residues: 3-phosphoshikimate 1-carboxyvinyltransferase (426 aa).

3-phosphoshikimate-binding residues include Lys-22, Ser-23, and Arg-27. Lys-22 serves as a coordination point for phosphoenolpyruvate. Residues Gly-96 and Arg-124 each coordinate phosphoenolpyruvate. 3-phosphoshikimate contacts are provided by Ser-170, Ser-171, Gln-172, Ser-198, Asp-314, Asn-337, and Lys-341. Gln-172 contributes to the phosphoenolpyruvate binding site. Asp-314 (proton acceptor) is an active-site residue. Phosphoenolpyruvate-binding residues include Arg-345, Arg-387, and Lys-412.

It belongs to the EPSP synthase family. In terms of assembly, monomer.

It is found in the cytoplasm. The catalysed reaction is 3-phosphoshikimate + phosphoenolpyruvate = 5-O-(1-carboxyvinyl)-3-phosphoshikimate + phosphate. Its pathway is metabolic intermediate biosynthesis; chorismate biosynthesis; chorismate from D-erythrose 4-phosphate and phosphoenolpyruvate: step 6/7. In terms of biological role, catalyzes the transfer of the enolpyruvyl moiety of phosphoenolpyruvate (PEP) to the 5-hydroxyl of shikimate-3-phosphate (S3P) to produce enolpyruvyl shikimate-3-phosphate and inorganic phosphate. This Shewanella baltica (strain OS195) protein is 3-phosphoshikimate 1-carboxyvinyltransferase.